The sequence spans 273 residues: uncharacterized protein (273 aa).

This is an uncharacterized protein from Acanthamoeba polyphaga (Amoeba).